The sequence spans 69 residues: uncharacterized protein (69 aa).

This is an uncharacterized protein from Bacillus anthracis.